Consider the following 553-residue polypeptide: Phosphoenolpyruvate carboxykinase (ATP) (553 aa).

The disordered stretch occupies residues 1 to 22; it reads MAPPTAVGSSINFEGHPTIKST. Residue 255 to 262 coordinates ATP; the sequence is GLSGTGKT.

It belongs to the phosphoenolpyruvate carboxykinase (ATP) family.

It catalyses the reaction oxaloacetate + ATP = phosphoenolpyruvate + ADP + CO2. It functions in the pathway carbohydrate biosynthesis; gluconeogenesis. The sequence is that of Phosphoenolpyruvate carboxykinase (ATP) (PCK1) from Candida albicans (Yeast).